We begin with the raw amino-acid sequence, 167 residues long: uncharacterized protein (167 aa).

Positions 148–167 (NKESRGENDGGEERESANIY) are disordered.

This is an uncharacterized protein from Homo sapiens (Human).